The sequence spans 540 residues: Ribonuclease Y (540 aa).

A helical membrane pass occupies residues 4–24 (TILVPVAVAIVSVLVGGCAGY). Residues 230–293 (TVSVVNLPND…EIAKRALERL (64 aa)) enclose the KH domain. Residues 356–449 (VLSHSIEVGK…VVAADTISSA (94 aa)) enclose the HD domain.

It belongs to the RNase Y family.

The protein resides in the cell membrane. Its function is as follows. Endoribonuclease that initiates mRNA decay. In Lactobacillus gasseri (strain ATCC 33323 / DSM 20243 / BCRC 14619 / CIP 102991 / JCM 1131 / KCTC 3163 / NCIMB 11718 / NCTC 13722 / AM63), this protein is Ribonuclease Y.